A 127-amino-acid polypeptide reads, in one-letter code: DNA-directed RNA polymerases I, II, and III subunit RPABC2 (127 aa).

A compositionally biased stretch (acidic residues) spans Met1–Gly32. The segment at Met1 to Ile52 is disordered. Position 2 is an N-acetylserine (Ser2). Phosphoserine; by CK2 is present on Ser2.

The protein belongs to the archaeal Rpo6/eukaryotic RPB6 RNA polymerase subunit family. In terms of assembly, component of the RNA polymerase I (Pol I), RNA polymerase II (Pol II) and RNA polymerase III (Pol III) complexes consisting of at least 13, 12 and 17 subunits, respectively. Pol I complex consists of a ten-subunit catalytic core composed of POLR1A/RPA1, POLR1B/RPA2, POLR1C/RPAC1, POLR1D/RPAC2, POLR1H/RPA12, POLR2E/RPABC1, POLR2F/RPABC2, POLR2H/RPABC3, POLR2K/RPABC4 and POLR2L/RPABC5; a mobile stalk subunit POLR1F/RPA43 protruding from the core and additional subunits homologous to general transcription factors POLR1E/RPA49 and POLR1G/RPA34. Part of Pol I pre-initiation complex (PIC), in which Pol I core assembles with RRN3 and promoter-bound UTBF and SL1/TIF-IB complex. Pol II complex contains a ten-subunit catalytic core composed of POLR2A/RPB1, POLR2B/RPB2, POLR2C/RPB3, POLR2I/RPB9, POLR2J/RPB11, POLR2E/RPABC1, POLR2F/RPABC2, POLR2H/RPABC3, POLR2K/RPABC4 and POLR2L/RPABC5 and a mobile stalk composed of two subunits POLR2D/RPB4 and POLR2G/RPB7. Part of Pol II(G) complex, in which Pol II core associates with an additional subunit POLR2M; unlike conventional Pol II, Pol II(G) functions as a transcriptional repressor. Part of TBP-based Pol II pre-initiation complex (PIC), in which Pol II core assembles with general transcription factors and other specific initiation factors including GTF2E1, GTF2E2, GTF2F1, GTF2F2, TCEA1, ERCC2, ERCC3, GTF2H2, GTF2H3, GTF2H4, GTF2H5, GTF2A1, GTF2A2, GTF2B and TBP; this large multi-subunit PIC complex mediates DNA unwinding and targets Pol II core to the transcription start site where the first phosphodiester bond forms. Pol III complex consists of a ten-subunit catalytic core composed of POLR3A/RPC1, POLR3B/RPC2, POLR1C/RPAC1, POLR1D/RPAC2, POLR3K/RPC10, POLR2E/RPABC1, POLR2F/RPABC2, POLR2H/RPABC3, POLR2K/RPABC4 and POLR2L/RPABC5; a mobile stalk composed of two subunits POLR3H/RPC8 and CRCP/RPC9, protruding from the core and functioning primarily in transcription initiation; and additional subunits homologous to general transcription factors of the RNA polymerase II machinery, POLR3C/RPC3-POLR3F/RPC6-POLR3G/RPC7 heterotrimer required for transcription initiation and POLR3D/RPC4-POLR3E/RPC5 heterodimer involved in both transcription initiation and termination.

Its subcellular location is the nucleus. The protein localises to the nucleolus. In terms of biological role, DNA-dependent RNA polymerase catalyzes the transcription of DNA into RNA using the four ribonucleoside triphosphates as substrates. Common component of RNA polymerases I, II, and III which synthesize ribosomal RNA precursors, mRNA precursors and many functional non-coding RNAs, and small RNAs, such as 5S rRNA and tRNAs, respectively. Pol II is the central component of the basal RNA polymerase II transcription machinery. Pols are composed of mobile elements that move relative to each other. In Pol II, POLR2F/RPABC2 is part of the clamp element and together with parts of POLR2A/RPB1 and POLR2B/RPB2 forms a pocket to which the POLR2D/RPB4-POLR2G/RPB7 subcomplex binds. The chain is DNA-directed RNA polymerases I, II, and III subunit RPABC2 (POLR2F) from Bos taurus (Bovine).